The chain runs to 439 residues: Trigger factor (439 aa).

Residues 162–247 (GDTVTIDYVG…IHEVKAKQLP (86 aa)) form the PPIase FKBP-type domain.

The protein belongs to the FKBP-type PPIase family. Tig subfamily.

The protein localises to the cytoplasm. The enzyme catalyses [protein]-peptidylproline (omega=180) = [protein]-peptidylproline (omega=0). Involved in protein export. Acts as a chaperone by maintaining the newly synthesized protein in an open conformation. Functions as a peptidyl-prolyl cis-trans isomerase. In Lactobacillus delbrueckii subsp. bulgaricus (strain ATCC 11842 / DSM 20081 / BCRC 10696 / JCM 1002 / NBRC 13953 / NCIMB 11778 / NCTC 12712 / WDCM 00102 / Lb 14), this protein is Trigger factor.